Consider the following 67-residue polypeptide: Metallothionein-B (67 aa).

The protein belongs to the metallothionein superfamily. Type 4 family.

Functionally, metallothioneins have a high content of cysteine residues that bind various heavy metals. This is Metallothionein-B from Sphaerechinus granularis (Purple sea urchin).